Consider the following 607-residue polypeptide: Large ribosomal subunit assembly factor BipA (607 aa).

The region spanning 3–198 is the tr-type G domain; sequence HSIRNIAIIA…SIIKYAPAPN (196 aa). GTP is bound by residues 15–20 and 128–131; these read DHGKTT and NKID.

The protein belongs to the TRAFAC class translation factor GTPase superfamily. Classic translation factor GTPase family. BipA subfamily. As to quaternary structure, monomer.

It is found in the cytoplasm. The enzyme catalyses GTP + H2O = GDP + phosphate + H(+). A 50S ribosomal subunit assembly protein with GTPase activity, required for 50S subunit assembly at low temperatures, may also play a role in translation. Binds GTP and analogs. Binds the 70S ribosome between the 30S and 50S subunits, in a similar position as ribosome-bound EF-G; it contacts a number of ribosomal proteins, both rRNAs and the A-site tRNA. The chain is Large ribosomal subunit assembly factor BipA from Buchnera aphidicola subsp. Acyrthosiphon pisum (strain APS) (Acyrthosiphon pisum symbiotic bacterium).